The following is a 456-amino-acid chain: Argininosuccinate lyase (456 aa).

The protein belongs to the lyase 1 family. Argininosuccinate lyase subfamily.

It localises to the cytoplasm. The enzyme catalyses 2-(N(omega)-L-arginino)succinate = fumarate + L-arginine. Its pathway is amino-acid biosynthesis; L-arginine biosynthesis; L-arginine from L-ornithine and carbamoyl phosphate: step 3/3. The polypeptide is Argininosuccinate lyase (Shewanella amazonensis (strain ATCC BAA-1098 / SB2B)).